The chain runs to 98 residues: Large ribosomal subunit protein uL23 (98 aa).

The protein belongs to the universal ribosomal protein uL23 family. Part of the 50S ribosomal subunit. Contacts protein L29, and trigger factor when it is bound to the ribosome.

In terms of biological role, one of the early assembly proteins it binds 23S rRNA. One of the proteins that surrounds the polypeptide exit tunnel on the outside of the ribosome. Forms the main docking site for trigger factor binding to the ribosome. This Cereibacter sphaeroides (strain ATCC 17029 / ATH 2.4.9) (Rhodobacter sphaeroides) protein is Large ribosomal subunit protein uL23.